Consider the following 183-residue polypeptide: Endoribonuclease YbeY (183 aa).

His140, His144, and His150 together coordinate Zn(2+).

The protein belongs to the endoribonuclease YbeY family. Zn(2+) is required as a cofactor.

It localises to the cytoplasm. Functionally, single strand-specific metallo-endoribonuclease involved in late-stage 70S ribosome quality control and in maturation of the 3' terminus of the 16S rRNA. The chain is Endoribonuclease YbeY from Bradyrhizobium diazoefficiens (strain JCM 10833 / BCRC 13528 / IAM 13628 / NBRC 14792 / USDA 110).